A 373-amino-acid chain; its full sequence is tRNA (guanine(26)-N(2))-dimethyltransferase (373 aa).

Residues 2–365 form the Trm1 methyltransferase domain; sequence KIISEGETKL…AELSDLVVLI (364 aa). Positions 35, 66, 86, 113, and 114 each coordinate S-adenosyl-L-methionine.

The protein belongs to the class I-like SAM-binding methyltransferase superfamily. Trm1 family.

The catalysed reaction is guanosine(26) in tRNA + 2 S-adenosyl-L-methionine = N(2)-dimethylguanosine(26) in tRNA + 2 S-adenosyl-L-homocysteine + 2 H(+). Dimethylates a single guanine residue at position 26 of a number of tRNAs using S-adenosyl-L-methionine as donor of the methyl groups. The protein is tRNA (guanine(26)-N(2))-dimethyltransferase of Methanococcus maripaludis (strain C5 / ATCC BAA-1333).